An 80-amino-acid polypeptide reads, in one-letter code: uncharacterized protein (80 aa).

Belongs to the BolA/IbaG family.

This is an uncharacterized protein from Buchnera aphidicola subsp. Acyrthosiphon pisum (strain APS) (Acyrthosiphon pisum symbiotic bacterium).